A 759-amino-acid polypeptide reads, in one-letter code: Protein AKNAD1 (759 aa).

The tract at residues 169-246 is disordered; the sequence is TDQLNPKKDG…HTEKASSGNR (78 aa). The segment covering 181–192 has biased composition (polar residues); sequence SNKPGSPTMTEE. Residues 371 to 482 are a coiled coil; sequence QKISQGKQMC…EDVKDKVDES (112 aa). A compositionally biased stretch (polar residues) spans 484-496; the sequence is YTSAPSLPVSSPV. Disordered regions lie at residues 484 to 543, 634 to 654, 678 to 723, and 735 to 759; these read YTSA…QEAP, EKAP…FCSD, CRKE…PSLA, and PDTS…MKSQ. Residues 497 to 509 show a composition bias toward low complexity; sequence TLDDLASTSSSLS. The span at 639–654 shows a compositional bias: polar residues; the sequence is SDSTPNSDTGHSFCSD. Basic and acidic residues predominate over residues 679 to 688; that stretch reads RKEPPKEFHY. The segment covering 735–744 has biased composition (polar residues); it reads PDTSKSSPTP.

Belongs to the AKNA family.

This is Protein AKNAD1 (AKNAD1) from Macaca fascicularis (Crab-eating macaque).